Reading from the N-terminus, the 250-residue chain is tRNA (guanine-N(1)-)-methyltransferase (250 aa).

S-adenosyl-L-methionine contacts are provided by residues Gly114 and 134-139 (IGDYVL).

This sequence belongs to the RNA methyltransferase TrmD family. In terms of assembly, homodimer.

It localises to the cytoplasm. The catalysed reaction is guanosine(37) in tRNA + S-adenosyl-L-methionine = N(1)-methylguanosine(37) in tRNA + S-adenosyl-L-homocysteine + H(+). Its function is as follows. Specifically methylates guanosine-37 in various tRNAs. In Moorella thermoacetica (strain ATCC 39073 / JCM 9320), this protein is tRNA (guanine-N(1)-)-methyltransferase.